Here is a 949-residue protein sequence, read N- to C-terminus: Bifunctional uridylyltransferase/uridylyl-removing enzyme (949 aa).

Positions 1 to 377 (MARHETSFPE…RFRNRVRKIP (377 aa)) are uridylyltransferase. Positions 378 to 733 (GTLDFVDDGG…VRTHDFHAIT (356 aa)) are uridylyl-removing. The 117-residue stretch at 494-610 (VDEHLLRAVD…VDFAERVQSL (117 aa)) folds into the HD domain. ACT domains lie at 734 to 815 (EITV…DVIA) and 845 to 926 (VIEV…ERMP). The disordered stretch occupies residues 925 to 949 (MPSGIIAPTPVPRASHGSKATKAET).

The protein belongs to the GlnD family. Mg(2+) is required as a cofactor.

It catalyses the reaction [protein-PII]-L-tyrosine + UTP = [protein-PII]-uridylyl-L-tyrosine + diphosphate. The catalysed reaction is [protein-PII]-uridylyl-L-tyrosine + H2O = [protein-PII]-L-tyrosine + UMP + H(+). Its activity is regulated as follows. Uridylyltransferase (UTase) activity is inhibited by glutamine, while glutamine activates uridylyl-removing (UR) activity. Its function is as follows. Modifies, by uridylylation and deuridylylation, the PII regulatory proteins (GlnB and homologs), in response to the nitrogen status of the cell that GlnD senses through the glutamine level. Under low glutamine levels, catalyzes the conversion of the PII proteins and UTP to PII-UMP and PPi, while under higher glutamine levels, GlnD hydrolyzes PII-UMP to PII and UMP (deuridylylation). Thus, controls uridylylation state and activity of the PII proteins, and plays an important role in the regulation of nitrogen fixation and metabolism. This is Bifunctional uridylyltransferase/uridylyl-removing enzyme from Sinorhizobium medicae (strain WSM419) (Ensifer medicae).